The sequence spans 63 residues: uncharacterized protein (63 aa).

This is an uncharacterized protein from Bacillus subtilis (strain 168).